Consider the following 380-residue polypeptide: Queuine tRNA-ribosyltransferase (380 aa).

The Proton acceptor role is filled by aspartate 93. Substrate-binding positions include 93–97 (DSGGF), aspartate 147, glutamine 198, and glycine 225. Residues 256-262 (GVGLPSN) are RNA binding. The Nucleophile role is filled by aspartate 275. The tract at residues 280–284 (ARNGR) is RNA binding; important for wobble base 34 recognition. Residues cysteine 313, cysteine 315, cysteine 318, and histidine 344 each coordinate Zn(2+).

Belongs to the queuine tRNA-ribosyltransferase family. In terms of assembly, homodimer. Within each dimer, one monomer is responsible for RNA recognition and catalysis, while the other monomer binds to the replacement base PreQ1. The cofactor is Zn(2+).

The enzyme catalyses 7-aminomethyl-7-carbaguanine + guanosine(34) in tRNA = 7-aminomethyl-7-carbaguanosine(34) in tRNA + guanine. Its pathway is tRNA modification; tRNA-queuosine biosynthesis. Catalyzes the base-exchange of a guanine (G) residue with the queuine precursor 7-aminomethyl-7-deazaguanine (PreQ1) at position 34 (anticodon wobble position) in tRNAs with GU(N) anticodons (tRNA-Asp, -Asn, -His and -Tyr). Catalysis occurs through a double-displacement mechanism. The nucleophile active site attacks the C1' of nucleotide 34 to detach the guanine base from the RNA, forming a covalent enzyme-RNA intermediate. The proton acceptor active site deprotonates the incoming PreQ1, allowing a nucleophilic attack on the C1' of the ribose to form the product. After dissociation, two additional enzymatic reactions on the tRNA convert PreQ1 to queuine (Q), resulting in the hypermodified nucleoside queuosine (7-(((4,5-cis-dihydroxy-2-cyclopenten-1-yl)amino)methyl)-7-deazaguanosine). This is Queuine tRNA-ribosyltransferase from Clostridium perfringens (strain ATCC 13124 / DSM 756 / JCM 1290 / NCIMB 6125 / NCTC 8237 / Type A).